Reading from the N-terminus, the 88-residue chain is Large ribosomal subunit protein bL27 (88 aa).

The tract at residues 1 to 24 is disordered; it reads MAHKKAGGSSRNGRDSEGRRLGVK.

This sequence belongs to the bacterial ribosomal protein bL27 family.

The protein is Large ribosomal subunit protein bL27 of Methylobacterium radiotolerans (strain ATCC 27329 / DSM 1819 / JCM 2831 / NBRC 15690 / NCIMB 10815 / 0-1).